A 398-amino-acid chain; its full sequence is Acetate kinase (398 aa).

Asn-7 contacts Mg(2+). Lys-14 is an ATP binding site. Arg-91 lines the substrate pocket. Residue Asp-148 is the Proton donor/acceptor of the active site. ATP is bound by residues 208–212 (HIGNG), 283–285 (DMR), and 331–335 (GVGEN). Glu-384 contributes to the Mg(2+) binding site.

The protein belongs to the acetokinase family. In terms of assembly, homodimer. Mg(2+) is required as a cofactor. The cofactor is Mn(2+).

It is found in the cytoplasm. The enzyme catalyses acetate + ATP = acetyl phosphate + ADP. It participates in metabolic intermediate biosynthesis; acetyl-CoA biosynthesis; acetyl-CoA from acetate: step 1/2. Catalyzes the formation of acetyl phosphate from acetate and ATP. Can also catalyze the reverse reaction. This chain is Acetate kinase, found in Phocaeicola vulgatus (strain ATCC 8482 / DSM 1447 / JCM 5826 / CCUG 4940 / NBRC 14291 / NCTC 11154) (Bacteroides vulgatus).